A 526-amino-acid polypeptide reads, in one-letter code: Peptide chain release factor 3 (526 aa).

In terms of domain architecture, tr-type G spans 9 to 277 (DKRRTFAIIS…GIVEWAPIPQ (269 aa)). GTP contacts are provided by residues 18 to 25 (SHPDAGKT), 86 to 90 (DTPGH), and 140 to 143 (NKLD).

This sequence belongs to the TRAFAC class translation factor GTPase superfamily. Classic translation factor GTPase family. PrfC subfamily.

Its subcellular location is the cytoplasm. Its function is as follows. Increases the formation of ribosomal termination complexes and stimulates activities of RF-1 and RF-2. It binds guanine nucleotides and has strong preference for UGA stop codons. It may interact directly with the ribosome. The stimulation of RF-1 and RF-2 is significantly reduced by GTP and GDP, but not by GMP. This Shewanella halifaxensis (strain HAW-EB4) protein is Peptide chain release factor 3.